The primary structure comprises 274 residues: Kit ligand (274 aa).

A signal peptide spans 1–25 (MKKTQTWIITCIYLQLLLFNPLVRT). Gln-26 carries the pyrrolidone carboxylic acid modification. Residues 26–215 (QGICRNRVTD…SDSIEDSSLQ (190 aa)) are Extracellular-facing. Disulfide bonds link Cys-29–Cys-114 and Cys-68–Cys-164. Residues Asn-90, Asn-97, Asn-145, and Asn-196 are each glycosylated (N-linked (GlcNAc...) asparagine). The helical transmembrane segment at 216-238 (WAAVALPAFFSLVIGFAFGALYW) threads the bilayer. Residues 239–274 (KKKQPNLTRTVENIQINEEDNEISMLQEKEREFQEV) are Cytoplasmic-facing.

The protein belongs to the SCF family. In terms of assembly, homodimer, non-covalently linked. Heterotetramer with KIT, binding two KIT molecules; thereby mediates KIT dimerization and subsequent activation by autophosphorylation. A soluble form is produced by proteolytic processing of the extracellular domain.

Its subcellular location is the cytoplasm. The protein localises to the cytoskeleton. It localises to the cell membrane. The protein resides in the cell projection. It is found in the lamellipodium. Its subcellular location is the filopodium. The protein localises to the secreted. In terms of biological role, ligand for the receptor-type protein-tyrosine kinase KIT. Plays an essential role in the regulation of cell survival and proliferation, hematopoiesis, stem cell maintenance, gametogenesis, mast cell development, migration and function, and in melanogenesis. KITLG/SCF binding can activate several signaling pathways. Promotes phosphorylation of PIK3R1, the regulatory subunit of phosphatidylinositol 3-kinase, and subsequent activation of the kinase AKT1. KITLG/SCF and KIT also transmit signals via GRB2 and activation of RAS, RAF1 and the MAP kinases MAPK1/ERK2 and/or MAPK3/ERK1. KITLG/SCF and KIT promote activation of STAT family members STAT1, STAT3 and STAT5. KITLG/SCF and KIT promote activation of PLCG1, leading to the production of the cellular signaling molecules diacylglycerol and inositol 1,4,5-trisphosphate. KITLG/SCF acts synergistically with other cytokines, probably interleukins. The chain is Kit ligand (KITLG) from Sus scrofa (Pig).